Here is a 558-residue protein sequence, read N- to C-terminus: ATP synthase subunit alpha (558 aa).

172-179 (GDRKTGKT) contacts ATP. Residues 536-558 (ESVKVHQAIPAKTSEKSKNSTPR) are disordered. Over residues 548–558 (TSEKSKNSTPR) the composition is skewed to basic and acidic residues.

This sequence belongs to the ATPase alpha/beta chains family. As to quaternary structure, F-type ATPases have 2 components, CF(1) - the catalytic core - and CF(0) - the membrane proton channel. CF(1) has five subunits: alpha(3), beta(3), gamma(1), delta(1), epsilon(1). CF(0) has three main subunits: a(1), b(2) and c(9-12). The alpha and beta chains form an alternating ring which encloses part of the gamma chain. CF(1) is attached to CF(0) by a central stalk formed by the gamma and epsilon chains, while a peripheral stalk is formed by the delta and b chains.

It is found in the cell membrane. It carries out the reaction ATP + H2O + 4 H(+)(in) = ADP + phosphate + 5 H(+)(out). Functionally, produces ATP from ADP in the presence of a proton gradient across the membrane. The alpha chain is a regulatory subunit. The polypeptide is ATP synthase subunit alpha (Mycobacterium leprae (strain Br4923)).